The following is a 417-amino-acid chain: Tryptophan synthase beta chain (417 aa).

At K110 the chain carries N6-(pyridoxal phosphate)lysine.

Belongs to the TrpB family. In terms of assembly, tetramer of two alpha and two beta chains. Requires pyridoxal 5'-phosphate as cofactor.

The catalysed reaction is (1S,2R)-1-C-(indol-3-yl)glycerol 3-phosphate + L-serine = D-glyceraldehyde 3-phosphate + L-tryptophan + H2O. It functions in the pathway amino-acid biosynthesis; L-tryptophan biosynthesis; L-tryptophan from chorismate: step 5/5. Its function is as follows. The beta subunit is responsible for the synthesis of L-tryptophan from indole and L-serine. The polypeptide is Tryptophan synthase beta chain (Prochlorococcus marinus (strain NATL1A)).